Consider the following 397-residue polypeptide: NADH-quinone oxidoreductase subunit D (397 aa).

Belongs to the complex I 49 kDa subunit family. As to quaternary structure, NDH-1 is composed of 14 different subunits. Subunits NuoB, C, D, E, F, and G constitute the peripheral sector of the complex.

It is found in the cell inner membrane. It carries out the reaction a quinone + NADH + 5 H(+)(in) = a quinol + NAD(+) + 4 H(+)(out). Functionally, NDH-1 shuttles electrons from NADH, via FMN and iron-sulfur (Fe-S) centers, to quinones in the respiratory chain. The immediate electron acceptor for the enzyme in this species is believed to be ubiquinone. Couples the redox reaction to proton translocation (for every two electrons transferred, four hydrogen ions are translocated across the cytoplasmic membrane), and thus conserves the redox energy in a proton gradient. This Magnetococcus marinus (strain ATCC BAA-1437 / JCM 17883 / MC-1) protein is NADH-quinone oxidoreductase subunit D.